Here is a 328-residue protein sequence, read N- to C-terminus: Biotin synthase (328 aa).

The 228-residue stretch at 50 to 277 (FGDQVHLCCI…GKEIVICGGR (228 aa)) folds into the Radical SAM core domain. C67, C71, and C74 together coordinate [4Fe-4S] cluster. 3 residues coordinate [2Fe-2S] cluster: S111, C142, and C202.

It belongs to the radical SAM superfamily. Biotin synthase family. In terms of assembly, homodimer. Requires [4Fe-4S] cluster as cofactor. The cofactor is [2Fe-2S] cluster.

It catalyses the reaction (4R,5S)-dethiobiotin + (sulfur carrier)-SH + 2 reduced [2Fe-2S]-[ferredoxin] + 2 S-adenosyl-L-methionine = (sulfur carrier)-H + biotin + 2 5'-deoxyadenosine + 2 L-methionine + 2 oxidized [2Fe-2S]-[ferredoxin]. Its pathway is cofactor biosynthesis; biotin biosynthesis; biotin from 7,8-diaminononanoate: step 2/2. Functionally, catalyzes the conversion of dethiobiotin (DTB) to biotin by the insertion of a sulfur atom into dethiobiotin via a radical-based mechanism. The sequence is that of Biotin synthase from Desulfatibacillum aliphaticivorans.